The following is a 268-amino-acid chain: MKVQPVLVNKDNYSYLVIDEKNKVAIAIDPCEPNKVISSLSSISSDIKINSVFTTHHHWDHAGGNNLIKTIIKDINVYGRDERFEGITKKLENNEVLKIGSLKIKTLDAPAHTSSHVLYLIEDENEPNQVKSLFTGDTLFIGGCGRLFEGNPEQMYNALYNVIGKLPDNTLVYVGHEYTLKNLEFAKTLESENENKELYNFYDQCKEKLANGEFTVPSSIAQEKLINPFMRCHLPSIYNHYLKENPNSINPPSPIDVLGFIRSLKDKF.

The Zn(2+) site is built by H56, H58, D60, H61, H112, D137, and H176. Residue 176-178 (HEY) participates in substrate binding.

It belongs to the metallo-beta-lactamase superfamily. Glyoxalase II family. Monomer. Zn(2+) is required as a cofactor.

The enzyme catalyses an S-(2-hydroxyacyl)glutathione + H2O = a 2-hydroxy carboxylate + glutathione + H(+). It functions in the pathway secondary metabolite metabolism; methylglyoxal degradation; (R)-lactate from methylglyoxal: step 2/2. Functionally, thiolesterase that catalyzes the hydrolysis of S-D-lactoyl-glutathione to form glutathione and D-lactic acid. In Dictyostelium discoideum (Social amoeba), this protein is Hydroxyacylglutathione hydrolase (hagh).